We begin with the raw amino-acid sequence, 585 residues long: Clathrin heavy chain linker domain-containing protein 1 (585 aa).

The stretch at 118 to 239 forms a coiled coil; sequence QLEAKMRIID…DLRFRHQRLQ (122 aa).

The sequence is that of Clathrin heavy chain linker domain-containing protein 1 (Clhc1) from Rattus norvegicus (Rat).